Consider the following 137-residue polypeptide: Small integral membrane protein 9 (137 aa).

Positions 1 to 23 are cleaved as a signal peptide; that stretch reads MKPLKLFCIGLLLCPLVCLLLET. Residues 24–84 lie on the Extracellular side of the membrane; that stretch reads APPPSALLTL…NHLSDFFKSS (61 aa). Residues 85–105 traverse the membrane as a helical segment; sequence IPPAAIFALFVTTAIMRAAIV. Topologically, residues 106-137 are cytoplasmic; it reads NKRLEEPHRQWTIDQRSSLEMQNMNLIKLFGG.

The protein localises to the cell membrane. This is Small integral membrane protein 9 (Smim9) from Mus musculus (Mouse).